A 184-amino-acid chain; its full sequence is Shikimate kinase (184 aa).

18 to 23 (GAGKTT) lines the ATP pocket. T22 contributes to the Mg(2+) binding site. Substrate-binding residues include D40, R64, and G86. Position 124 (R124) interacts with ATP. Residue R143 participates in substrate binding. Q160 contacts ATP.

It belongs to the shikimate kinase family. As to quaternary structure, monomer. Requires Mg(2+) as cofactor.

The protein resides in the cytoplasm. The catalysed reaction is shikimate + ATP = 3-phosphoshikimate + ADP + H(+). It participates in metabolic intermediate biosynthesis; chorismate biosynthesis; chorismate from D-erythrose 4-phosphate and phosphoenolpyruvate: step 5/7. In terms of biological role, catalyzes the specific phosphorylation of the 3-hydroxyl group of shikimic acid using ATP as a cosubstrate. The sequence is that of Shikimate kinase from Chromobacterium violaceum (strain ATCC 12472 / DSM 30191 / JCM 1249 / CCUG 213 / NBRC 12614 / NCIMB 9131 / NCTC 9757 / MK).